Here is a 906-residue protein sequence, read N- to C-terminus: Protein translocase subunit SecA (906 aa).

Residues glutamine 86, 104-108, and aspartate 511 contribute to the ATP site; that span reads GEGKT. Composition is skewed to basic and acidic residues over residues 853 to 865 and 877 to 888; these read HESVIDNNQRHDE and VRREGPKVKRND. A disordered region spans residues 853–906; it reads HESVIDNNQRHDEDEQEEAPKVQQVRREGPKVKRNDPCPCGSGKKYKQCHGKVE. Positions 890, 892, 901, and 902 each coordinate Zn(2+). The segment covering 896-906 has biased composition (basic residues); that stretch reads KKYKQCHGKVE.

This sequence belongs to the SecA family. In terms of assembly, monomer and homodimer. Part of the essential Sec protein translocation apparatus which comprises SecA, SecYEG and auxiliary proteins SecDF-YajC and YidC. It depends on Zn(2+) as a cofactor.

Its subcellular location is the cell inner membrane. The protein localises to the cytoplasm. It catalyses the reaction ATP + H2O + cellular proteinSide 1 = ADP + phosphate + cellular proteinSide 2.. Functionally, part of the Sec protein translocase complex. Interacts with the SecYEG preprotein conducting channel. Has a central role in coupling the hydrolysis of ATP to the transfer of proteins into and across the cell membrane, serving both as a receptor for the preprotein-SecB complex and as an ATP-driven molecular motor driving the stepwise translocation of polypeptide chains across the membrane. The chain is Protein translocase subunit SecA from Francisella tularensis subsp. holarctica (strain FTNF002-00 / FTA).